The sequence spans 389 residues: Succinate--CoA ligase [ADP-forming] subunit beta (389 aa).

In terms of domain architecture, ATP-grasp spans 9–236 (KELFASHGVP…KDAEDPLEAK (228 aa)). ATP contacts are provided by residues lysine 45, 52–54 (GRG), serine 94, and glutamate 99. Mg(2+)-binding residues include asparagine 191 and aspartate 205. Residues asparagine 256 and 318–320 (GIT) each bind substrate.

The protein belongs to the succinate/malate CoA ligase beta subunit family. Heterotetramer of two alpha and two beta subunits. The cofactor is Mg(2+).

It carries out the reaction succinate + ATP + CoA = succinyl-CoA + ADP + phosphate. It catalyses the reaction GTP + succinate + CoA = succinyl-CoA + GDP + phosphate. It functions in the pathway carbohydrate metabolism; tricarboxylic acid cycle; succinate from succinyl-CoA (ligase route): step 1/1. Succinyl-CoA synthetase functions in the citric acid cycle (TCA), coupling the hydrolysis of succinyl-CoA to the synthesis of either ATP or GTP and thus represents the only step of substrate-level phosphorylation in the TCA. The beta subunit provides nucleotide specificity of the enzyme and binds the substrate succinate, while the binding sites for coenzyme A and phosphate are found in the alpha subunit. The sequence is that of Succinate--CoA ligase [ADP-forming] subunit beta from Saccharopolyspora erythraea (strain ATCC 11635 / DSM 40517 / JCM 4748 / NBRC 13426 / NCIMB 8594 / NRRL 2338).